Reading from the N-terminus, the 343-residue chain is Anthranilate phosphoribosyltransferase (343 aa).

Residues glycine 84, 87–88 (GD), threonine 92, 94–97 (NIST), 112–120 (KHGNRGVSS), and serine 124 each bind 5-phospho-alpha-D-ribose 1-diphosphate. An anthranilate-binding site is contributed by glycine 84. Residue serine 96 participates in Mg(2+) binding. Position 115 (asparagine 115) interacts with anthranilate. An anthranilate-binding site is contributed by arginine 170. Mg(2+)-binding residues include aspartate 229 and glutamate 230.

This sequence belongs to the anthranilate phosphoribosyltransferase family. Homodimer. The cofactor is Mg(2+).

The enzyme catalyses N-(5-phospho-beta-D-ribosyl)anthranilate + diphosphate = 5-phospho-alpha-D-ribose 1-diphosphate + anthranilate. The protein operates within amino-acid biosynthesis; L-tryptophan biosynthesis; L-tryptophan from chorismate: step 2/5. Catalyzes the transfer of the phosphoribosyl group of 5-phosphorylribose-1-pyrophosphate (PRPP) to anthranilate to yield N-(5'-phosphoribosyl)-anthranilate (PRA). In Burkholderia pseudomallei (strain 1106a), this protein is Anthranilate phosphoribosyltransferase.